The chain runs to 360 residues: Protein RecA (360 aa).

64–71 is an ATP binding site; it reads GHESSGKT. The disordered stretch occupies residues 333-360; that stretch reads QEQVQPEPKSKQSKSKQASEQATQDELI.

This sequence belongs to the RecA family.

Its subcellular location is the cytoplasm. Its function is as follows. Can catalyze the hydrolysis of ATP in the presence of single-stranded DNA, the ATP-dependent uptake of single-stranded DNA by duplex DNA, and the ATP-dependent hybridization of homologous single-stranded DNAs. It interacts with LexA causing its activation and leading to its autocatalytic cleavage. The polypeptide is Protein RecA (Francisella philomiragia subsp. philomiragia (strain ATCC 25017 / CCUG 19701 / FSC 153 / O#319-036)).